The sequence spans 1313 residues: Angiotensin-converting enzyme (1313 aa).

Positions 1-35 (MGAASGQRGRWPLSPPLLMLSLLLLLLLPPSPAPA) are cleaved as a signal peptide. Residues 36-1265 (LDPGLQPGNF…LEPQQARVGQ (1230 aa)) lie on the Extracellular side of the membrane. Asn-44, Asn-60, Asn-80, Asn-117, Asn-152, and Asn-166 each carry an N-linked (GlcNAc...) asparagine glycan. Peptidase M2 domains are found at residues 46–630 (SADE…LGWP) and 649–1228 (ETDE…LGWP). Cys-163 and Cys-171 are oxidised to a cystine. Chloride is bound at residue Tyr-237. Asn-324 carries an N-linked (GlcNAc...) asparagine glycan. A disulfide bond links Cys-365 and Cys-383. His-396 lines the Zn(2+) pocket. Catalysis depends on Glu-397, which acts as the Proton acceptor 1. Positions 400 and 424 each coordinate Zn(2+). An N-linked (GlcNAc...) asparagine glycan is attached at Asn-515. The active-site Proton donor 1 is the His-526. Arg-535 contributes to the chloride binding site. Cys-551 and Cys-563 form a disulfide bridge. N-linked (GlcNAc...) asparagine glycans are attached at residues Asn-683, Asn-701, Asn-720, and Asn-766. Cys-763 and Cys-769 are oxidised to a cystine. Arg-797 and Tyr-835 together coordinate chloride. N-linked (GlcNAc...) asparagine glycosylation occurs at Asn-948. An intrachain disulfide couples Cys-963 to Cys-981. His-994 is a binding site for Zn(2+). The active-site Proton acceptor 2 is Glu-995. Zn(2+)-binding residues include His-998 and Glu-1022. The chloride site is built by Trp-1096 and Arg-1100. The active-site Proton donor 2 is His-1124. A chloride-binding site is contributed by Arg-1133. An intrachain disulfide couples Cys-1149 to Cys-1161. A glycan (N-linked (GlcNAc...) asparagine) is linked at Asn-1197. Residues 1221 to 1262 (HGETLGWPEYTWTPNTARAEGSLPESSRVNFLGMYLEPQQAR) form a juxtamembrane stalk region. A helical transmembrane segment spans residues 1266–1282 (WVLLFLGVALLVATVGL). Over 1283-1313 (AHRLYNIHNHHSLRRPHRGPQFGSEVELRHS) the chain is Cytoplasmic. Phosphoserine is present on Ser-1306.

Belongs to the peptidase M2 family. In terms of assembly, monomer and homodimer; homodimerizes following binding to an inhibitor. Interacts with calmodulin (CALM1, CALM2 or CALM3); interaction takes place in the cytoplasmic region and regulates phosphorylation and proteolytic cleavage. It depends on Zn(2+) as a cofactor. The cofactor is chloride. In terms of processing, produced following proteolytic cleavage by secretase enzymes that cleave the transmembrane form in the juxtamembrane stalk region upstream of the transmembrane region. Cleavage can take place at different sites of the juxtamembrane stalk region. Phosphorylated by CK2 on Ser-1306; which allows membrane retention. Phosphorylated on tyrosine residues on its extracellular part, promoting cleavage by secretase enzymes and formation of the soluble form (Angiotensin-converting enzyme, soluble form). In terms of tissue distribution, expressed in brain, kidney, lung, skeletal muscle and heart. As to expression, testis-specific isoform is expressed in spermatocytes, adult testis.

Its subcellular location is the cell membrane. It localises to the cytoplasm. The protein resides in the secreted. The catalysed reaction is Release of a C-terminal dipeptide, oligopeptide-|-Xaa-Yaa, when Xaa is not Pro, and Yaa is neither Asp nor Glu. Thus, conversion of angiotensin I to angiotensin II, with increase in vasoconstrictor activity, but no action on angiotensin II.. The enzyme catalyses angiotensin I + H2O = L-histidyl-L-leucine + angiotensin II. It carries out the reaction bradykinin + H2O = L-Phe-L-Arg + bradykinin(1-7). It catalyses the reaction substance P + H2O = substance P(1-9) + L-Leu-L-Met-NH2. The catalysed reaction is substance P + H2O = substance P(1-8) + Gly-L-Leu-L-Met-NH2. The enzyme catalyses substance P + H2O = L-Phe-L-Phe-Gly-L-Leu-L-Met-NH2 + substance P(1-6). It carries out the reaction neurotensin + H2O = neurotensin(1-11) + L-isoleucyl-L-leucine. It catalyses the reaction goralatide + H2O = N-acetyl-L-seryl-L-aspartate + L-lysyl-L-proline. The catalysed reaction is Met-enkephalin + H2O = L-phenylalanyl-L-methionine + L-tyrosylglycylglycine. The enzyme catalyses Leu-enkephalin + H2O = L-tyrosylglycylglycine + L-phenylalanyl-L-leucine. It carries out the reaction Met-enkephalin-Arg-Phe + H2O = L-arginyl-L-phenylalanine + Met-enkephalin. With respect to regulation, the dipeptidyl carboxypeptidase activity is strongly activated by chloride. The dipeptidyl carboxypeptidase activity is specifically inhibited by lisinopril, captopril and enalaprilat. Its activity is regulated as follows. Strongly inhibited by lisinopril and captopril. In terms of biological role, dipeptidyl carboxypeptidase that removes dipeptides from the C-terminus of a variety of circulating hormones, such as angiotensin I, bradykinin or enkephalins, thereby playing a key role in the regulation of blood pressure, electrolyte homeostasis or synaptic plasticity. Composed of two similar catalytic domains, each possessing a functional active site, with different selectivity for substrates. Plays a major role in the angiotensin-renin system that regulates blood pressure and sodium retention by the kidney by converting angiotensin I to angiotensin II, resulting in an increase of the vasoconstrictor activity of angiotensin. Also able to inactivate bradykinin, a potent vasodilator, and therefore enhance the blood pressure response. Acts as a regulator of synaptic transmission by mediating cleavage of neuropeptide hormones, such as substance P, neurotensin or enkephalins. Catalyzes degradation of different enkephalin neuropeptides (Met-enkephalin, Leu-enkephalin, Met-enkephalin-Arg-Phe and possibly Met-enkephalin-Arg-Gly-Leu). Acts as a regulator of synaptic plasticity in the nucleus accumbens of the brain by mediating cleavage of Met-enkephalin-Arg-Phe, a strong ligand of Mu-type opioid receptor OPRM1, into Met-enkephalin. Met-enkephalin-Arg-Phe cleavage by ACE decreases activation of OPRM1, leading to long-term synaptic potentiation of glutamate release. Also acts as a regulator of hematopoietic stem cell differentiation by mediating degradation of hemoregulatory peptide N-acetyl-SDKP (AcSDKP). Acts as a regulator of cannabinoid signaling pathway by mediating degradation of hemopressin, an antagonist peptide of the cannabinoid receptor CNR1. Involved in amyloid-beta metabolism by catalyzing degradation of Amyloid-beta protein 40 and Amyloid-beta protein 42 peptides, thereby preventing plaque formation. Catalyzes cleavage of cholecystokinin (maturation of Cholecystokinin-8 and Cholecystokinin-5) and Gonadoliberin-1 (both maturation and degradation) hormones. Degradation of hemoregulatory peptide N-acetyl-SDKP (AcSDKP) and amyloid-beta proteins is mediated by the N-terminal catalytic domain, while angiotensin I and cholecystokinin cleavage is mediated by the C-terminal catalytic region. Its function is as follows. Soluble form that is released in blood plasma and other body fluids following proteolytic cleavage in the juxtamembrane stalk region. Functionally, isoform produced by alternative promoter usage that is specifically expressed in spermatocytes and adult testis, and which is required for male fertility. In contrast to somatic isoforms, only contains one catalytic domain. Acts as a dipeptidyl carboxypeptidase that removes dipeptides from the C-terminus of substrates. The identity of substrates that are needed for male fertility is unknown. May also have a glycosidase activity which releases GPI-anchored proteins from the membrane by cleaving the mannose linkage in the GPI moiety. The GPIase activity was reported to be essential for the egg-binding ability of the sperm. This activity is however unclear and has been challenged by other groups, suggesting that it may be indirect. The protein is Angiotensin-converting enzyme of Rattus norvegicus (Rat).